The primary structure comprises 267 residues: NAD kinase (267 aa).

Residue aspartate 52 is the Proton acceptor of the active site. NAD(+) is bound by residues 52–53, arginine 57, 121–122, arginine 132, lysine 150, aspartate 152, 163–168, and alanine 187; these read DG, NE, and TAYSLS.

This sequence belongs to the NAD kinase family. A divalent metal cation is required as a cofactor.

The protein resides in the cytoplasm. It catalyses the reaction NAD(+) + ATP = ADP + NADP(+) + H(+). Involved in the regulation of the intracellular balance of NAD and NADP, and is a key enzyme in the biosynthesis of NADP. Catalyzes specifically the phosphorylation on 2'-hydroxyl of the adenosine moiety of NAD to yield NADP. This chain is NAD kinase, found in Fusobacterium nucleatum subsp. nucleatum (strain ATCC 25586 / DSM 15643 / BCRC 10681 / CIP 101130 / JCM 8532 / KCTC 2640 / LMG 13131 / VPI 4355).